The sequence spans 440 residues: Transposon Ty1-ML1 Gag polyprotein (440 aa).

Composition is skewed to polar residues over residues 1–23 (MESQQLSNYPNISHGSACASVTS), 48–60 (TKANSQQTTTPAS), and 127–152 (QSQFPQYPSSVGTPLSTPSPESGNTF). Disordered stretches follow at residues 1–88 (MESQ…YPQQ), 126–173 (PQSQ…RPPP), and 352–440 (GSRN…PETY). The span at 153–165 (TDSSSADSDMTST) shows a compositional bias: low complexity. Residues 299–401 (NNGIHINNKV…NSKSKTARAH (103 aa)) are RNA-binding. The segment covering 402–418 (NVSTSNNSPSTDNDSIS) has biased composition (low complexity). Position 416 is a phosphoserine (Ser416). Polar residues predominate over residues 419–428 (KSTTEPIQLN). A compositionally biased stretch (basic and acidic residues) spans 429–440 (NKHDLHLRPETY).

In terms of assembly, homotrimer.

It is found in the cytoplasm. Its function is as follows. Capsid protein (CA) is the structural component of the virus-like particle (VLP), forming the shell that encapsulates the retrotransposons dimeric RNA genome. The particles are assembled from trimer-clustered units and there are holes in the capsid shells that allow for the diffusion of macromolecules. CA also has nucleocapsid-like chaperone activity, promoting primer tRNA(i)-Met annealing to the multipartite primer-binding site (PBS), dimerization of Ty1 RNA and initiation of reverse transcription. This Saccharomyces cerevisiae (strain ATCC 204508 / S288c) (Baker's yeast) protein is Transposon Ty1-ML1 Gag polyprotein (TY1A-ML1).